The sequence spans 342 residues: Cytochrome f (342 aa).

The signal sequence occupies residues 1–28 (MKKQWIAGAFGLTAALAGLVSVPQSALA). Residues Cys48, Cys51, and His52 each coordinate heme. A helical transmembrane segment spans residues 305 to 325 (VTWLVAFLAAAFICQLLLVLK).

This sequence belongs to the cytochrome f family. The 4 large subunits of the cytochrome b6-f complex are cytochrome b6, subunit IV (17 kDa polypeptide, PetD), cytochrome f and the Rieske protein, while the 4 small subunits are PetG, PetL, PetM and PetN. The complex functions as a dimer. Heme is required as a cofactor.

The protein localises to the cell inner membrane. Component of the cytochrome b6-f complex, which mediates electron transfer between photosystem II (PSII) and photosystem I (PSI), cyclic electron flow around PSI, and state transitions. The sequence is that of Cytochrome f (petA) from Gloeobacter violaceus (strain ATCC 29082 / PCC 7421).